The chain runs to 354 residues: Tetraacyldisaccharide 4'-kinase (354 aa).

Position 53 to 60 (53 to 60) interacts with ATP; sequence AWGGTGKT.

The protein belongs to the LpxK family.

The enzyme catalyses a lipid A disaccharide + ATP = a lipid IVA + ADP + H(+). The protein operates within glycolipid biosynthesis; lipid IV(A) biosynthesis; lipid IV(A) from (3R)-3-hydroxytetradecanoyl-[acyl-carrier-protein] and UDP-N-acetyl-alpha-D-glucosamine: step 6/6. In terms of biological role, transfers the gamma-phosphate of ATP to the 4'-position of a tetraacyldisaccharide 1-phosphate intermediate (termed DS-1-P) to form tetraacyldisaccharide 1,4'-bis-phosphate (lipid IVA). In Nitratidesulfovibrio vulgaris (strain ATCC 29579 / DSM 644 / CCUG 34227 / NCIMB 8303 / VKM B-1760 / Hildenborough) (Desulfovibrio vulgaris), this protein is Tetraacyldisaccharide 4'-kinase.